A 461-amino-acid chain; its full sequence is UDP-N-acetylmuramoylalanine--D-glutamate ligase (461 aa).

115–121 (GSNGKTT) contributes to the ATP binding site.

The protein belongs to the MurCDEF family.

Its subcellular location is the cytoplasm. It carries out the reaction UDP-N-acetyl-alpha-D-muramoyl-L-alanine + D-glutamate + ATP = UDP-N-acetyl-alpha-D-muramoyl-L-alanyl-D-glutamate + ADP + phosphate + H(+). The protein operates within cell wall biogenesis; peptidoglycan biosynthesis. Its function is as follows. Cell wall formation. Catalyzes the addition of glutamate to the nucleotide precursor UDP-N-acetylmuramoyl-L-alanine (UMA). This chain is UDP-N-acetylmuramoylalanine--D-glutamate ligase, found in Acidobacterium capsulatum (strain ATCC 51196 / DSM 11244 / BCRC 80197 / JCM 7670 / NBRC 15755 / NCIMB 13165 / 161).